The chain runs to 424 residues: 3-ketoacyl-CoA thiolase B, peroxisomal (424 aa).

The transit peptide at 1-26 (MHRLQVVLGHLAGRPESSSALQAAPC) directs the protein to the peroxisome. The PTS2-type peroxisomal targeting signal stretch occupies residues 1–26 (MHRLQVVLGHLAGRPESSSALQAAPC). Residue Cys-123 is the Acyl-thioester intermediate of the active site. An N6-acetyllysine mark is found at Lys-173 and Lys-234. CoA is bound by residues Arg-249, Thr-252, and Ser-276. Cys-408 acts as the Proton donor/acceptor in catalysis.

The protein belongs to the thiolase-like superfamily. Thiolase family. In terms of assembly, homodimer. Interacts (via PTS2-type peroxisomal targeting signal region) with PEX7; leading to its translocation into peroxisomes. As to expression, mainly expressed in liver; weaker levels in kidney, intestine and white adipose tissue.

It localises to the peroxisome. The catalysed reaction is an acyl-CoA + acetyl-CoA = a 3-oxoacyl-CoA + CoA. The enzyme catalyses 2 acetyl-CoA = acetoacetyl-CoA + CoA. It carries out the reaction hexanoyl-CoA + acetyl-CoA = 3-oxooctanoyl-CoA + CoA. It catalyses the reaction tetradecanoyl-CoA + acetyl-CoA = 3-oxohexadecanoyl-CoA + CoA. The catalysed reaction is 3-oxohexadecanedioyl-CoA + CoA = tetradecanedioyl-CoA + acetyl-CoA. The enzyme catalyses 3-oxo-(6Z,9Z,12Z,15Z,18Z,21Z)-tetracosahexaenoyl-CoA + CoA = (4Z,7Z,10Z,13Z,16Z,19Z)-docosahexaenoyl-CoA + acetyl-CoA. Its pathway is lipid metabolism; peroxisomal fatty acid beta-oxidation. Functionally, responsible for the thiolytic cleavage of straight chain 3-keto fatty acyl-CoAs (3-oxoacyl-CoAs). Plays an important role in fatty acid peroxisomal beta-oxidation. Catalyzes the cleavage of short, medium, long, and very long straight chain 3-oxoacyl-CoAs. In Mus musculus (Mouse), this protein is 3-ketoacyl-CoA thiolase B, peroxisomal.